The chain runs to 120 residues: uncharacterized protein (120 aa).

This is an uncharacterized protein from Mycoplasma pneumoniae (strain ATCC 29342 / M129 / Subtype 1) (Mycoplasmoides pneumoniae).